We begin with the raw amino-acid sequence, 362 residues long: Atypical chemokine receptor 3 (362 aa).

Residues 1 to 40 (MDLHLFDYAEPGNFSDISWPCNSSDCIVVDTVLCPNMPNK) lie on the Extracellular side of the membrane. N-linked (GlcNAc...) asparagine glycans are attached at residues Asn13, Asn22, and Asn39. The helical transmembrane segment at 41-61 (SVLLYTLSFIYIFIFVIGMIA) threads the bilayer. Residues 62 to 81 (NSVVVWVNIQAKTTGYDTHC) lie on the Cytoplasmic side of the membrane. The helical transmembrane segment at 82–102 (YILNLAIADLWVVVTIPVWVV) threads the bilayer. Residues 103-118 (SLVQHNQWPMGELTCK) are Extracellular-facing. The cysteines at positions 117 and 196 are disulfide-linked. A helical transmembrane segment spans residues 119–139 (ITHLIFSINLFGSIFFLTCMS). Residues 140-162 (VDRYLSITYFASTSSRRKKVVRR) are Cytoplasmic-facing. A helical transmembrane segment spans residues 163–183 (AVCVLVWLLAFCVSLPDTYYL). The Extracellular segment spans residues 184–213 (KTVTSASNNETYCRSFYPEHSVKEWLISME). The helical transmembrane segment at 214–234 (LVSVVLGFAIPFCVIAVFYCL) threads the bilayer. Topologically, residues 235–252 (LARAISASSDQEKQSSRK) are cytoplasmic. A helical membrane pass occupies residues 253 to 273 (IIFSYVVVFLVCWLPYHVVVL). Residues 274–296 (LDIFSILHYIPFTCQLENFLFTA) lie on the Extracellular side of the membrane. The helical transmembrane segment at 297–319 (LHVTQCLSLVHCCVNPVLYSFIN) threads the bilayer. At 320 to 362 (RNYRYELMKAFIFKYSAKTGLTKLIDASRVSETEYSALEQNAK) the chain is on the cytoplasmic side. Residues 324–362 (YELMKAFIFKYSAKTGLTKLIDASRVSETEYSALEQNAK) form a C-terminal cytoplasmic tail region. Ser347, Ser350, and Ser355 each carry phosphoserine.

It belongs to the G-protein coupled receptor 1 family. Atypical chemokine receptor subfamily. Homodimer. Can form heterodimers with CXCR4; heterodimerization may regulate CXCR4 signaling activity. Interacts with ARRB1 and ARRB2. The Ser/Thr residues in the C-terminal cytoplasmic tail may be phosphorylated. Post-translationally, ubiquitinated at the Lys residues in its C-terminal cytoplasmic tail and is essential for correct trafficking from and to the cell membrane. Deubiquitinated by CXCL12-stimulation in a reversible manner.

The protein resides in the cell membrane. It is found in the early endosome. The protein localises to the recycling endosome. Its function is as follows. Atypical chemokine receptor that controls chemokine levels and localization via high-affinity chemokine binding that is uncoupled from classic ligand-driven signal transduction cascades, resulting instead in chemokine sequestration, degradation, or transcytosis. Also known as interceptor (internalizing receptor) or chemokine-scavenging receptor or chemokine decoy receptor. Acts as a receptor for chemokines CXCL11 and CXCL12/SDF1. Chemokine binding does not activate G-protein-mediated signal transduction but instead induces beta-arrestin recruitment, leading to ligand internalization and activation of MAPK signaling pathway. Required for regulation of CXCR4 protein levels in migrating interneurons, thereby adapting their chemokine responsiveness. In glioma cells, transduces signals via MEK/ERK pathway, mediating resistance to apoptosis. Promotes cell growth and survival. Not involved in cell migration, adhesion or proliferation of normal hematopoietic progenitors but activated by CXCL11 in malignant hemapoietic cells, leading to phosphorylation of ERK1/2 (MAPK3/MAPK1) and enhanced cell adhesion and migration. Plays a regulatory role in CXCR4-mediated activation of cell surface integrins by CXCL12. Required for heart valve development. Regulates axon guidance in the oculomotor system through the regulation of CXCL12 levels. In Canis lupus familiaris (Dog), this protein is Atypical chemokine receptor 3 (ACKR3).